A 217-amino-acid polypeptide reads, in one-letter code: Probable transaldolase (217 aa).

Catalysis depends on lysine 83, which acts as the Schiff-base intermediate with substrate.

This sequence belongs to the transaldolase family. Type 3B subfamily.

It localises to the cytoplasm. It catalyses the reaction D-sedoheptulose 7-phosphate + D-glyceraldehyde 3-phosphate = D-erythrose 4-phosphate + beta-D-fructose 6-phosphate. The protein operates within carbohydrate degradation; pentose phosphate pathway; D-glyceraldehyde 3-phosphate and beta-D-fructose 6-phosphate from D-ribose 5-phosphate and D-xylulose 5-phosphate (non-oxidative stage): step 2/3. Functionally, transaldolase is important for the balance of metabolites in the pentose-phosphate pathway. This is Probable transaldolase from Anaeromyxobacter sp. (strain K).